The chain runs to 200 residues: Small ribosomal subunit protein uS4 (200 aa).

Residues 22–42 (TGKELEKRPYAPGPHGPNQRK) are disordered. Positions 92-152 (ARLDNLVYRM…EKSNSLVVVK (61 aa)) constitute an S4 RNA-binding domain.

Belongs to the universal ribosomal protein uS4 family. In terms of assembly, part of the 30S ribosomal subunit. Contacts protein S5. The interaction surface between S4 and S5 is involved in control of translational fidelity.

Its function is as follows. One of the primary rRNA binding proteins, it binds directly to 16S rRNA where it nucleates assembly of the body of the 30S subunit. In terms of biological role, with S5 and S12 plays an important role in translational accuracy. The polypeptide is Small ribosomal subunit protein uS4 (Bacillus mycoides (strain KBAB4) (Bacillus weihenstephanensis)).